The primary structure comprises 378 residues: Probable pectin lyase A (378 aa).

The first 18 residues, 1–18, serve as a signal peptide directing secretion; that stretch reads MKYQGLLAIAGCIASASA. Intrachain disulfides connect C81–C100 and C90–C224. N-linked (GlcNAc...) asparagine glycosylation is present at N127. The active site involves R254. Cysteines 321 and 329 form a disulfide.

It belongs to the polysaccharide lyase 1 family.

The protein resides in the secreted. The enzyme catalyses Eliminative cleavage of (1-&gt;4)-alpha-D-galacturonan methyl ester to give oligosaccharides with 4-deoxy-6-O-methyl-alpha-D-galact-4-enuronosyl groups at their non-reducing ends.. Functionally, pectinolytic enzymes consist of four classes of enzymes: pectin lyase, polygalacturonase, pectin methylesterase and rhamnogalacturonase. Among pectinolytic enzymes, pectin lyase is the most important in depolymerization of pectin, since it cleaves internal glycosidic bonds of highly methylated pectins. The chain is Probable pectin lyase A (pelA) from Neosartorya fischeri (strain ATCC 1020 / DSM 3700 / CBS 544.65 / FGSC A1164 / JCM 1740 / NRRL 181 / WB 181) (Aspergillus fischerianus).